The chain runs to 222 residues: Latexin (222 aa).

Residues 1 to 97 enclose the Cystatin LXN-type 1 domain; that stretch reads MEIPPTHYAA…NFTFEGEIGK (97 aa). At Lys-55 the chain carries N6-acetyllysine. The tract at residues 98-117 is alpha-helical linker; it reads NPDEEDNTFYQSLMSLKRPL. Residues 118–222 enclose the Cystatin LXN-type 2 domain; it reads EAQDIPDNFG…SRLPKEGQAE (105 aa).

This sequence belongs to the protease inhibitor I47 (latexin) family. As to expression, highly enriched in macrophages.

Its subcellular location is the cytoplasm. Functionally, hardly reversible, non-competitive, and potent inhibitor of CPA1, CPA2 and CPA4. May play a role in inflammation. The chain is Latexin (Lxn) from Mus musculus (Mouse).